Consider the following 386-residue polypeptide: Succinate--CoA ligase [ADP-forming] subunit beta (386 aa).

One can recognise an ATP-grasp domain in the interval 9–244; it reads KDLLTAYQLP…PSQENIRDVL (236 aa). ATP is bound by residues K46, 53 to 55, V102, and E107; that span reads GRG. Mg(2+) is bound by residues N199 and D213. Substrate contacts are provided by residues N264 and 321-323; that span reads GIM.

Belongs to the succinate/malate CoA ligase beta subunit family. As to quaternary structure, heterotetramer of two alpha and two beta subunits. Mg(2+) is required as a cofactor.

The catalysed reaction is succinate + ATP + CoA = succinyl-CoA + ADP + phosphate. It catalyses the reaction GTP + succinate + CoA = succinyl-CoA + GDP + phosphate. The protein operates within carbohydrate metabolism; tricarboxylic acid cycle; succinate from succinyl-CoA (ligase route): step 1/1. Succinyl-CoA synthetase functions in the citric acid cycle (TCA), coupling the hydrolysis of succinyl-CoA to the synthesis of either ATP or GTP and thus represents the only step of substrate-level phosphorylation in the TCA. The beta subunit provides nucleotide specificity of the enzyme and binds the substrate succinate, while the binding sites for coenzyme A and phosphate are found in the alpha subunit. The chain is Succinate--CoA ligase [ADP-forming] subunit beta from Chlamydia trachomatis serovar A (strain ATCC VR-571B / DSM 19440 / HAR-13).